Here is a 298-residue protein sequence, read N- to C-terminus: Developmental pluripotency-associated protein 2 (298 aa).

A disordered region spans residues 36–61 (NMEQMEPSVSSTSDVKLEKPKKYNPG). In terms of domain architecture, SAP spans 92–126 (INKVCRDTLRDWCQQLGLSTNGKKIEVYLRLHRHA).

In terms of assembly, interacts with DPPA4. In terms of tissue distribution, expressed in embryonic stem cells. No expression is seen in 5 months embryo, mesenchymal stem cells, embryonic fibrocytes and adult tissues.

It localises to the nucleus. Binds to target gene promoters, including NKX2-5 and SYCE1, but not GATA4, and may be involved in the maintenance of the active epigenetic status of these genes. This Homo sapiens (Human) protein is Developmental pluripotency-associated protein 2 (DPPA2).